Here is a 154-residue protein sequence, read N- to C-terminus: Small ribosomal subunit protein uS7 (154 aa).

The protein belongs to the universal ribosomal protein uS7 family.

The polypeptide is Small ribosomal subunit protein uS7 (RPS5) (Nicotiana plumbaginifolia (Leadwort-leaved tobacco)).